A 1622-amino-acid polypeptide reads, in one-letter code: DNA (cytosine-5)-methyltransferase 1 (1622 aa).

Residues Met1 to Met145 are interaction with DNMT3A. 2 interaction with the PRC2/EED-EZH2 complex regions span residues Met1 to Lys342 and Thr304 to Asn610. Position 15 is a phosphoserine (Ser15). The DMAP1-binding domain occupies Pro16 to Asn109. Lys70 carries the N6,N6-dimethyllysine; by EHMT2 modification. The tract at residues Thr100–Pro360 is disordered. A compositionally biased stretch (basic residues) spans Pro126–Arg137. Ser138 is modified (phosphoserine). Lys139 bears the N6-methyllysine; by SETD7 mark. Residue Ser140 is modified to Phosphoserine; by PKB/AKT1. Residues Ile146 to Glu213 are interaction with DNMT3B. A phosphoserine mark is found at Ser149 and Ser151. A compositionally biased stretch (low complexity) spans Ser149–Ser166. Thr163 is subject to Phosphothreonine. Lys169 is subject to N6-acetyllysine. A Nuclear localization signal motif is present at residues Lys173–Arg200. 4 stretches are compositionally biased toward basic and acidic residues: residues Pro176–Lys197, Arg207–Arg222, Asp237–Asp269, and Lys276–Val300. Residue Thr304 is modified to Phosphothreonine. The segment at Lys327–Leu556 is DNA replication foci-targeting sequence. Residues Cys359 and Cys362 each contribute to the Zn(2+) site. Lys372 carries the N6-acetyllysine modification. Ser400 bears the Phosphoserine mark. Zn(2+) contacts are provided by Cys420 and His424. A phosphoserine mark is found at Ser515 and Ser555. The CXXC-type zinc-finger motif lies at Asn650–Pro696. The Zn(2+) site is built by Cys657, Cys660, Cys663, Cys668, Cys671, Cys674, Cys690, and Cys695. An autoinhibitory linker region spans residues Asn697–Glu758. Residues Glu702–Asp733 form a disordered region. The segment covering Ala703–Pro714 has biased composition (acidic residues). Ser718 carries the post-translational modification Phosphoserine. Residues Lys720–Asn731 show a composition bias toward basic residues. Position 736 is a phosphoserine (Ser736). An N6-acetyllysine modification is found at Lys753. In terms of domain architecture, BAH 1 spans Glu759–Pro884. A Phosphoserine modification is found at Ser882. An N6-acetyllysine mark is found at Lys895, Lys961, and Lys980. In terms of domain architecture, BAH 2 spans Thr977 to Pro1105. Residues Lys1099–Ala1138 are disordered. 6 repeat units span residues Lys1114–Gly1115, Lys1116–Gly1117, Lys1118–Gly1119, Lys1120–Gly1121, Lys1122–Gly1123, and Lys1124–Gly1125. The interval Lys1114 to Pro1127 is 7 X 2 AA tandem repeats of K-G. Positions Gly1115 to Gly1125 are enriched in basic residues. An N6-acetyllysine mark is found at Lys1116, Lys1118, Lys1120, Lys1122, Lys1124, and Lys1126. Residues Lys1126 to Pro1127 form a 7; approximate repeat. Residues Lys1126–Asp1622 form an interaction with the PRC2/EED-EZH2 complex region. In terms of domain architecture, SAM-dependent MTase C5-type spans Leu1144–Ser1603. A catalytic region spans residues Leu1144 to Asp1622. Residues Ser1151, Gly1155–Leu1156, Glu1173–Met1174, Asp1195–Cys1196, and Cys1196 contribute to the S-adenosyl-L-methionine site. Cys1231 is an active-site residue. Lys1354 bears the N6-acetyllysine mark. Ser1436 carries the phosphoserine modification. Asn1582 and Val1584 together coordinate S-adenosyl-L-methionine. A Glycyl lysine isopeptide (Lys-Gly) (interchain with G-Cter in SUMO2) cross-link involves residue Lys1613.

It belongs to the class I-like SAM-binding methyltransferase superfamily. C5-methyltransferase family. In terms of assembly, homodimer. Forms a stable complex with E2F1, BB1 and HDAC1. Forms a complex with DMAP1 and HDAC2, with direct interaction. Interacts with the PRC2/EED-EZH2 complex. Probably part of a corepressor complex containing ZNF304, TRIM28, SETDB1 and DNMT1. Interacts with UHRF1; promoting its recruitment to hemimethylated DNA. Interacts with USP7, promoting its deubiquitination. Interacts with PCNA. Interacts with MBD2 and MBD3. Interacts with DNMT3A and DNMT3B. Interacts with UBC9. Interacts with CSNK1D. Interacts with HDAC1. Interacts with BAZ2A/TIP5. Interacts with SIRT7. Interacts with ZNF263; recruited to the SIX3 promoter along with other proteins involved in chromatin modification and transcriptional corepression where it contributes to transcriptional repression. Interacts with L3MBTL3 and DCAF5; the interaction requires DNMT1 methylation at Lys-139 and is necessary to target DNMT1 for ubiquitination by the CRL4-DCAF5 E3 ubiquitin ligase complex and proteasomal degradation. Interacts with PHF20L1; the interaction requires DNMT1 methylation at Lys-139 and protects DNMT1 from ubiquitination and proteasomal degradation. Post-translationally, sumoylated; sumoylation increases activity. Acetylation on multiple lysines, mainly by KAT2B/PCAF, regulates cell cycle G(2)/M transition. Deacetylation of Lys-1116 and Lys-1354 by SIRT1 increases methyltransferase activity. In terms of processing, phosphorylation of Ser-151 by CDKs is important for enzymatic activity and protein stability. Phosphorylation of Ser-140 by AKT1 prevents methylation by SETD7 thereby increasing DNMT1 stability. Post-translationally, methylation at Lys-139 by SETD7 is necessary for the regulation of DNMT1 proteasomal degradation. Ubiquitinated by UHRF1; interaction with USP7 counteracts ubiquitination by UHRF1 by promoting deubiquitination and preventing degradation by the proteasome. As to expression, isoforms 0 and 8 are highly expressed in placenta, brain, lung, spleen, kidney, heart, and at much lower levels in liver. Isoform 1 is expressed in cerebellum, isoform 2 in muscle and testis, isoform 3 in lung, isoform 4 in spleen and brain, and isoform 5 in brain.

The protein localises to the nucleus. It catalyses the reaction a 2'-deoxycytidine in DNA + S-adenosyl-L-methionine = a 5-methyl-2'-deoxycytidine in DNA + S-adenosyl-L-homocysteine + H(+). Its function is as follows. Methylates CpG residues. Preferentially methylates hemimethylated DNA. Associates with DNA replication sites in S phase maintaining the methylation pattern in the newly synthesized strand, that is essential for epigenetic inheritance. Associates with chromatin during G2 and M phases to maintain DNA methylation independently of replication. It is responsible for maintaining methylation patterns established in development. DNA methylation is coordinated with methylation of histones. Mediates transcriptional repression by direct binding to HDAC2. In association with DNMT3B and via the recruitment of CTCFL/BORIS, involved in activation of BAG1 gene expression by modulating dimethylation of promoter histone H3 at H3K4 and H3K9. Probably forms a corepressor complex required for activated KRAS-mediated promoter hypermethylation and transcriptional silencing of tumor suppressor genes (TSGs) or other tumor-related genes in colorectal cancer (CRC) cells. Also required to maintain a transcriptionally repressive state of genes in undifferentiated embryonic stem cells (ESCs). Associates at promoter regions of tumor suppressor genes (TSGs) leading to their gene silencing. Promotes tumor growth. In Rattus norvegicus (Rat), this protein is DNA (cytosine-5)-methyltransferase 1 (Dnmt1).